The primary structure comprises 260 residues: Putative ABC transporter ATP-binding protein PF0068 (260 aa).

Residues 2–234 enclose the ABC transporter domain; sequence IEVKGVWFWY…DLKRYKLEEP (233 aa). Residue 34-41 coordinates ATP; that stretch reads GPNGSGKT.

It belongs to the ABC transporter superfamily.

The protein resides in the cell membrane. Functionally, probably part of an ABC transporter complex. Responsible for energy coupling to the transport system. The sequence is that of Putative ABC transporter ATP-binding protein PF0068 from Pyrococcus furiosus (strain ATCC 43587 / DSM 3638 / JCM 8422 / Vc1).